Reading from the N-terminus, the 271-residue chain is Calretinin (271 aa).

6 EF-hand domains span residues 16 to 51, 63 to 98, 107 to 142, 151 to 186, 195 to 230, and 235 to 270; these read LTAT…LEKA, NLGE…EENF, GSST…LLKK, KLQE…QENF, LTSE…LYEK, and MNIQ…SEPP. 25 residues coordinate Ca(2+): Asp-29, Asp-31, Asn-33, Tyr-35, Glu-40, Asp-76, Asn-78, Asp-80, Lys-82, Glu-87, Asp-120, Asp-122, Ser-124, Tyr-126, Glu-131, Asp-164, Asn-166, Asp-168, Lys-170, Glu-175, Asp-208, Asp-210, Ser-212, Tyr-214, and Glu-219. Tyr-214 carries the phosphotyrosine modification.

The protein belongs to the calbindin family.

Its subcellular location is the synapse. It localises to the cell projection. The protein localises to the dendrite. Functionally, calcium-binding protein involved in calcium homeostasis and signal transduction. It plays a critical role in buffering intracellular calcium levels and modulating calcium-dependent signaling pathways. Predominantly expressed in specific neuronal populations, influences synaptic plasticity and neuronal excitability, contributing to learning and memory. During embryonic development, it facilitates neuronal differentiation and maturation. In Bos taurus (Bovine), this protein is Calretinin (CALB2).